The following is a 147-amino-acid chain: MGGCMHSTQDKSLHLEGDPNPSAAPTSTCAPRKMPKRISISKQLASVKALRKCSDLEKAIATTALIFRNSSDSDGKLEKAIAKDLLQTQFRNFAEGQETKPKYREILSELDEHTENKLDFEDFMILLLSITVMSDLLQNIRNVKIMK.

The disordered stretch occupies residues 1 to 32 (MGGCMHSTQDKSLHLEGDPNPSAAPTSTCAPR). A compositionally biased stretch (basic and acidic residues) spans 8 to 17 (TQDKSLHLEG).

It belongs to the S-100 family.

The protein localises to the cell projection. Its subcellular location is the cilium. Functionally, may be a component of the linker structure that bridges the ciliary membrane and peripheral singlet microtubules. The protein is Sentan (SNTN) of Homo sapiens (Human).